A 356-amino-acid chain; its full sequence is Glutamine synthetase PR-1 (356 aa).

Positions 19–99 constitute a GS beta-grasp domain; sequence VIAEYIWIGG…VICDAYTPAG (81 aa). The interval 41–64 is disordered; that stretch reads PGPVKNPSELPKWNYDGSSTGQAP. The GS catalytic domain occupies 106 to 356; that stretch reads KRHNAAKIFS…IADTTILWKP (251 aa).

This sequence belongs to the glutamine synthetase family. Homooctamer. In terms of tissue distribution, roots.

It is found in the cytoplasm. The catalysed reaction is L-glutamate + NH4(+) + ATP = L-glutamine + ADP + phosphate + H(+). This Phaseolus vulgaris (Kidney bean) protein is Glutamine synthetase PR-1.